A 157-amino-acid chain; its full sequence is Protein PEROXIN-4 (157 aa).

The 151-residue stretch at 3–153 (ASRARLFKEY…AQMYTRLAAM (151 aa)) folds into the UBC core domain. Cys-90 serves as the catalytic Glycyl thioester intermediate.

It belongs to the ubiquitin-conjugating enzyme family. Interacts with PEX22.

The protein resides in the peroxisome membrane. The enzyme catalyses S-ubiquitinyl-[E1 ubiquitin-activating enzyme]-L-cysteine + [E2 ubiquitin-conjugating enzyme]-L-cysteine = [E1 ubiquitin-activating enzyme]-L-cysteine + S-ubiquitinyl-[E2 ubiquitin-conjugating enzyme]-L-cysteine.. Its pathway is protein modification; protein ubiquitination. Required for peroxisome biogenesis. Necessary for the developmental elimination of obsolete peroxisome matrix proteins. May be involved in the ubiquitination of PEX5, targeting it for recycling. Accepts the ubiquitin from the E1 complex and catalyzes its covalent attachment to other proteins. This chain is Protein PEROXIN-4 (PEX4), found in Arabidopsis thaliana (Mouse-ear cress).